We begin with the raw amino-acid sequence, 519 residues long: Spermatocyte protein spe-8 (519 aa).

2 disordered regions span residues 1–39 (MSGV…NPNV) and 73–97 (NNLK…KQRD). Residues 73 to 84 (NNLKKSASFDSK) are compositionally biased toward polar residues. The segment covering 85–97 (NQPEDSKTPKQRD) has biased composition (basic and acidic residues). An SH2 domain is found at 119–208 (FYHGFMGRTE…PFYDNMTLIC (90 aa)). Residues 146–154 (VGRRVAYVI) and lysine 184 each bind ATP. A Protein kinase domain is found at 209 to 490 (GLARHEWQLN…KEEAGMHELD (282 aa)). The active-site Proton acceptor is aspartate 349.

It belongs to the protein kinase superfamily. Tyr protein kinase family. Fes/fps subfamily. In terms of tissue distribution, expressed in hermaphrodite larvae but not in adult. Expressed in both male larvae and adult.

The protein resides in the cell membrane. It localises to the cytoplasm. The enzyme catalyses L-tyrosyl-[protein] + ATP = O-phospho-L-tyrosyl-[protein] + ADP + H(+). Its function is as follows. Probable non-receptor tyrosine-protein kinase which plays a role in spermatid activation (spermiogenesis) in hermaphrodites. This is Spermatocyte protein spe-8 from Caenorhabditis briggsae.